The chain runs to 414 residues: Serine hydroxymethyltransferase (414 aa).

(6S)-5,6,7,8-tetrahydrofolate is bound by residues leucine 117 and 121–123; that span reads GHL. Lysine 226 bears the N6-(pyridoxal phosphate)lysine mark.

The protein belongs to the SHMT family. As to quaternary structure, homodimer. The cofactor is pyridoxal 5'-phosphate.

The protein localises to the cytoplasm. It carries out the reaction (6R)-5,10-methylene-5,6,7,8-tetrahydrofolate + glycine + H2O = (6S)-5,6,7,8-tetrahydrofolate + L-serine. It participates in one-carbon metabolism; tetrahydrofolate interconversion. It functions in the pathway amino-acid biosynthesis; glycine biosynthesis; glycine from L-serine: step 1/1. Catalyzes the reversible interconversion of serine and glycine with tetrahydrofolate (THF) serving as the one-carbon carrier. This reaction serves as the major source of one-carbon groups required for the biosynthesis of purines, thymidylate, methionine, and other important biomolecules. Also exhibits THF-independent aldolase activity toward beta-hydroxyamino acids, producing glycine and aldehydes, via a retro-aldol mechanism. In Dictyoglomus thermophilum (strain ATCC 35947 / DSM 3960 / H-6-12), this protein is Serine hydroxymethyltransferase.